The chain runs to 496 residues: L-arabinose isomerase (496 aa).

Positions 302, 329, 346, and 445 each coordinate Mn(2+).

Belongs to the arabinose isomerase family. The cofactor is Mn(2+).

The enzyme catalyses beta-L-arabinopyranose = L-ribulose. The protein operates within carbohydrate degradation; L-arabinose degradation via L-ribulose; D-xylulose 5-phosphate from L-arabinose (bacterial route): step 1/3. Functionally, catalyzes the conversion of L-arabinose to L-ribulose. This chain is L-arabinose isomerase, found in Thermotoga petrophila (strain ATCC BAA-488 / DSM 13995 / JCM 10881 / RKU-1).